We begin with the raw amino-acid sequence, 144 residues long: Maximins 3/H2 (144 aa).

The first 18 residues, 1–18, serve as a signal peptide directing secretion; it reads MNFKYIVAVSFLIASAYA. Propeptides lie at residues 19–43 and 74–123; these read RSVQ…REIR and TAEE…KEKR. An Isoleucine amide modification is found at Ile143.

It belongs to the bombinin family. Expressed by the skin glands.

The protein localises to the secreted. Functionally, maximin-3 shows antibacterial activity against both Gram-positive and Gram-negative bacteria. It also shows antimicrobial activity against the fungus C.albicans, but not against A.flavus nor P.uticale. It has little hemolytic activity. It possess a significant cytotoxicity against tumor cell lines. It possess a significant anti-HIV activity. It shows high spermicidal activity. In terms of biological role, maximin-H2 shows antibacterial activity against both Gram-positive and Gram-negative bacteria. It also shows antimicrobial activity against the fungus C.albicans. Shows strong hemolytic activity. In Bombina maxima (Giant fire-bellied toad), this protein is Maximins 3/H2.